The primary structure comprises 841 residues: Auxin response factor 24 (841 aa).

The interval 109–140 (LPEKQQDGNGSGNGNVSKDKVEEEEVVPPAAT) is disordered. The segment at residues 148–250 (FCKTLTASDT…ELRVGVRRAM (103 aa)) is a DNA-binding region (TF-B3). Disordered stretches follow at residues 366–397 (PRPD…KRAR), 663–715 (QDAL…SRSC), and 804–841 (GALN…SENC). Basic and acidic residues predominate over residues 684 to 695 (AQHDSAREKHQS). 2 stretches are compositionally biased toward polar residues: residues 701-713 (KNIQ…GSSR) and 830-841 (GLSTPSLNSENC). Positions 713-797 (RSCKKVHKQG…HKIFIYTREE (85 aa)) constitute a PB1 domain.

It belongs to the ARF family. Homodimers and heterodimers. Expressed in roots, culms, leaves and young panicles.

It localises to the nucleus. Functionally, auxin response factors (ARFs) are transcriptional factors that bind specifically to the DNA sequence 5'-TGTCTC-3' found in the auxin-responsive promoter elements (AuxREs). The polypeptide is Auxin response factor 24 (ARF24) (Oryza sativa subsp. japonica (Rice)).